The chain runs to 1377 residues: Endoribonuclease Dicer homolog 2b (1377 aa).

Residues methionine 1–glycine 15 show a composition bias toward gly residues. The interval methionine 1 to proline 30 is disordered. The region spanning alanine 41 to isoleucine 222 is the Helicase ATP-binding domain. Leucine 54–threonine 61 lines the ATP pocket. The DECH box motif lies at aspartate 163–histidine 166. The 174-residue stretch at threonine 388–proline 561 folds into the Helicase C-terminal domain. The Dicer dsRNA-binding fold domain occupies serine 534–glutamate 626. The PAZ domain occupies arginine 798 to methionine 913. 2 consecutive RNase III domains span residues serine 940 to glycine 1095 and valine 1132 to lysine 1276. Mg(2+) is bound by residues glutamate 1171, aspartate 1262, and glutamate 1265. The DRBM domain maps to aspartate 1302 to alanine 1367.

The protein belongs to the helicase family. Dicer subfamily. In terms of assembly, may interact with ARGONAUTE1 or PINHEAD through their common PAZ domains. Mg(2+) serves as cofactor. The cofactor is Mn(2+).

Its subcellular location is the nucleus. Its function is as follows. Probably involved in the RNA silencing pathway. May cleave double-stranded RNA to produce short 21-24 nucleotides (nt) RNAs which target the selective destruction of complementary RNAs. This is Endoribonuclease Dicer homolog 2b (DCL2B) from Oryza sativa subsp. japonica (Rice).